A 170-amino-acid polypeptide reads, in one-letter code: Disulfide bond formation protein B (170 aa).

Residues Met-1–Leu-14 lie on the Cytoplasmic side of the membrane. A helical membrane pass occupies residues Leu-15–Tyr-31. At Leu-32–Tyr-49 the chain is on the periplasmic side. Residues Cys-41 and Cys-44 are joined by a disulfide bond. The chain crosses the membrane as a helical span at residues Phe-50–Ile-64. The Cytoplasmic segment spans residues Arg-65 to Trp-71. Residues Val-72 to Ala-89 traverse the membrane as a helical segment. Over Arg-90–Gly-144 the chain is Periplasmic. A disulfide bridge links Cys-102 with Cys-130. Residues Trp-145 to Arg-163 traverse the membrane as a helical segment. Topologically, residues His-164–Gly-170 are cytoplasmic.

This sequence belongs to the DsbB family.

The protein resides in the cell inner membrane. Required for disulfide bond formation in some periplasmic proteins. Acts by oxidizing the DsbA protein. The protein is Disulfide bond formation protein B of Burkholderia ambifaria (strain ATCC BAA-244 / DSM 16087 / CCUG 44356 / LMG 19182 / AMMD) (Burkholderia cepacia (strain AMMD)).